The primary structure comprises 635 residues: Chaperone protein DnaK (635 aa).

Thr200 bears the Phosphothreonine; by autocatalysis mark. The interval 595–635 (KAQPLTEKVQAKSSAENTSKEKSKADDDVVDADFEEVKDDK) is disordered. The span at 612–621 (TSKEKSKADD) shows a compositional bias: basic and acidic residues. Acidic residues predominate over residues 622–635 (DVVDADFEEVKDDK).

Belongs to the heat shock protein 70 family.

Acts as a chaperone. The protein is Chaperone protein DnaK of Ruthia magnifica subsp. Calyptogena magnifica.